The chain runs to 137 residues: Urease subunit beta (137 aa).

Residues 113 to 137 are disordered; sequence NGHPNAGVKNDEGKQNANKESGDNR.

This sequence belongs to the urease beta subunit family. Heterotrimer of UreA (gamma), UreB (beta) and UreC (alpha) subunits. Three heterotrimers associate to form the active enzyme.

It is found in the cytoplasm. It carries out the reaction urea + 2 H2O + H(+) = hydrogencarbonate + 2 NH4(+). It functions in the pathway nitrogen metabolism; urea degradation; CO(2) and NH(3) from urea (urease route): step 1/1. In Staphylococcus carnosus (strain TM300), this protein is Urease subunit beta.